The following is an 89-amino-acid chain: Small ribosomal subunit protein bS20 (89 aa).

Residues 1 to 21 (MANSAQAKKRARQNVKARKHN) are disordered. A compositionally biased stretch (basic residues) spans 7–21 (AKKRARQNVKARKHN).

The protein belongs to the bacterial ribosomal protein bS20 family.

Its function is as follows. Binds directly to 16S ribosomal RNA. In Acinetobacter baylyi (strain ATCC 33305 / BD413 / ADP1), this protein is Small ribosomal subunit protein bS20.